The primary structure comprises 87 residues: Small ribosomal subunit protein uS15 (87 aa).

The protein belongs to the universal ribosomal protein uS15 family. As to quaternary structure, part of the 30S ribosomal subunit. Forms a bridge to the 50S subunit in the 70S ribosome, contacting the 23S rRNA.

One of the primary rRNA binding proteins, it binds directly to 16S rRNA where it helps nucleate assembly of the platform of the 30S subunit by binding and bridging several RNA helices of the 16S rRNA. Functionally, forms an intersubunit bridge (bridge B4) with the 23S rRNA of the 50S subunit in the ribosome. The chain is Small ribosomal subunit protein uS15 from Alkaliphilus oremlandii (strain OhILAs) (Clostridium oremlandii (strain OhILAs)).